The chain runs to 476 residues: Angiotensinogen (476 aa).

A signal peptide spans 1 to 24 (MAPAGLSLGATILCLLAWAGLAAG). A disulfide bond links Cys42 and Cys161. The tract at residues 45–64 (LEKPSVETPADPTLTPVPIQ) is disordered. Asn295 carries N-linked (GlcNAc...) asparagine glycosylation.

The protein belongs to the serpin family. In terms of processing, in response to low blood pressure, the enzyme renin/REN cleaves angiotensinogen to produce angiotensin-1. Angiotensin-1 is a substrate of ACE (angiotensin converting enzyme) that removes a dipeptide to yield the physiologically active peptide angiotensin-2. Angiotensin-1 and angiotensin-2 can be further processed to generate angiotensin-3, angiotensin-4. Angiotensin 1-9 is cleaved from angiotensin-1 by ACE2 and can be further processed by ACE to produce angiotensin 1-7, angiotensin 1-5 and angiotensin 1-4. Angiotensin 1-7 has also been proposed to be cleaved from angiotensin-2 by ACE2 or from angiotensin-1 by MME (neprilysin). The disulfide bond is labile. Angiotensinogen is present in the circulation in a near 40:60 ratio with the oxidized disulfide-bonded form, which preferentially interacts with receptor-bound renin.

Its subcellular location is the secreted. Its function is as follows. Essential component of the renin-angiotensin system (RAS), a potent regulator of blood pressure, body fluid and electrolyte homeostasis. Functionally, acts directly on vascular smooth muscle as a potent vasoconstrictor, affects cardiac contractility and heart rate through its action on the sympathetic nervous system, and alters renal sodium and water absorption through its ability to stimulate the zona glomerulosa cells of the adrenal cortex to synthesize and secrete aldosterone. Acts by binding to angiotensin receptors AGTR1 and AGTR2. Also binds the DEAR/FBXW7-AS1 receptor. In terms of biological role, stimulates aldosterone release. Is a ligand for the G-protein coupled receptor MAS1. Has vasodilator and antidiuretic effects. Has an antithrombotic effect that involves MAS1-mediated release of nitric oxide from platelets. This is Angiotensinogen (AGT) from Ovis aries (Sheep).